Here is a 113-residue protein sequence, read N- to C-terminus: Replication initiation control protein YabA (113 aa).

Zn(2+)-binding residues include histidine 86, cysteine 88, cysteine 102, and cysteine 105.

It belongs to the YabA family. In terms of assembly, homotetramer. Interacts with both DnaA and DnaN, acting as a bridge between these two proteins. The cofactor is Zn(2+).

The protein localises to the cytoplasm. The protein resides in the nucleoid. Functionally, involved in control of chromosome replication initiation. Inhibits the cooperative binding of DnaA to the oriC region, thus negatively regulating initiation of chromosome replication. Inhibits the ability of DnaA-ATP to form a helix on DNA; does not disassemble preformed DnaA-DNA helices. Decreases the residence time of DnaA on the chromosome at its binding sites (oriC, replication forks and promoter-binding sites). Tethers DnaA to the replication machinery via the DNA polymerase beta sliding clamp subunit (dnaN). Associates with oriC and other DnaA targets on the chromosome in a DnaA-dependent manner. In Pediococcus pentosaceus (strain ATCC 25745 / CCUG 21536 / LMG 10740 / 183-1w), this protein is Replication initiation control protein YabA.